Here is a 415-residue protein sequence, read N- to C-terminus: Interleukin-5 receptor subunit alpha (415 aa).

Residues 1–17 (MVPVLLILVGALATLQA) form the signal peptide. Topologically, residues 18 to 339 (DLLNHKKFLL…KERKSLVEWH (322 aa)) are extracellular. A Fibronectin type-III 1 domain is found at 29–120 (PPVNFTIKAT…VSAELKAPPG (92 aa)). N-linked (GlcNAc...) asparagine glycosylation is found at Asn-32 and Asn-128. 2 disulfide bridges follow: Cys-131/Cys-152 and Cys-179/Cys-193. N-linked (GlcNAc...) asparagine glycans are attached at residues Asn-213 and Asn-241. Residues 238-331 (PPRNVTVEIE…WSQPIYVGKE (94 aa)) enclose the Fibronectin type-III 2 domain. A disulfide bridge connects residues Cys-266 and Cys-313. The WSXWS motif motif lies at 319-323 (WGEWS). A helical membrane pass occupies residues 340–361 (LIVLPTAACFVLLIFSLICRVC). At 362–415 (HLWTRLFPPVPAPKSNIKDLPVVTEYEKPSNETKIEVVHCVEEVGFEVMGNSTF) the chain is on the cytoplasmic side. Residues 367–375 (LFPPVPAPK) carry the Box 1 motif motif.

Interacts with IL5. Interacts with CSF2RB. Interacts with JAK2. Interacts with SDCBP. Expressed on eosinophils and basophils. Also on B-cells.

The protein resides in the membrane. Cell surface receptor that plays an important role in the survival, differentiation, and chemotaxis of eosinophils. Acts by forming a heterodimeric receptor with CSF2RB subunit and subsequently binding to interleukin-5. In unstimulated conditions, interacts constitutively with JAK2. Heterodimeric receptor activation leads to JAK2 stimulation and subsequent activation of the JAK-STAT pathway. The sequence is that of Interleukin-5 receptor subunit alpha (Il5ra) from Mus musculus (Mouse).